The sequence spans 315 residues: Ribose-phosphate pyrophosphokinase (315 aa).

Residues 37 to 39 (DGE) and 96 to 97 (RQ) contribute to the ATP site. Mg(2+)-binding residues include H131 and D171. K195 is a catalytic residue. Residues R197, D221, and 225–229 (DTGGT) each bind D-ribose 5-phosphate.

It belongs to the ribose-phosphate pyrophosphokinase family. Class I subfamily. Homohexamer. Mg(2+) serves as cofactor.

The protein resides in the cytoplasm. It carries out the reaction D-ribose 5-phosphate + ATP = 5-phospho-alpha-D-ribose 1-diphosphate + AMP + H(+). It participates in metabolic intermediate biosynthesis; 5-phospho-alpha-D-ribose 1-diphosphate biosynthesis; 5-phospho-alpha-D-ribose 1-diphosphate from D-ribose 5-phosphate (route I): step 1/1. Its function is as follows. Involved in the biosynthesis of the central metabolite phospho-alpha-D-ribosyl-1-pyrophosphate (PRPP) via the transfer of pyrophosphoryl group from ATP to 1-hydroxyl of ribose-5-phosphate (Rib-5-P). In Pasteurella multocida (strain Pm70), this protein is Ribose-phosphate pyrophosphokinase.